Consider the following 381-residue polypeptide: Guanine nucleotide-binding protein G(olf) subunit alpha (381 aa).

Residues 1 to 25 (MGCLGNSSKTAEDQGVDEKERREAN) form a disordered region. Gly2 carries N-palmitoyl glycine lipidation. Residue Cys3 is the site of S-palmitoyl cysteine attachment. Positions 10–25 (TAEDQGVDEKERREAN) are enriched in basic and acidic residues. In terms of domain architecture, G-alpha spans 41–381 (ATHRLLLLGA…RMHLKQYELL (341 aa)). Positions 44-57 (RLLLLGAGESGKST) are G1 motif. GTP-binding residues include Glu52, Ser53, Gly54, Lys55, Ser56, and Thr57. Residue Ser56 participates in Mg(2+) binding. A Phosphothreonine modification is found at Thr178. The interval 183-191 (DLLRCRVLT) is G2 motif. 3 residues coordinate GTP: Leu185, Arg186, and Thr191. Residues Thr191 and Asp210 each contribute to the Mg(2+) site. A G3 motif region spans residues 206–215 (FHMFDVGGQR). GTP is bound by residues Gly213, Asn279, Lys280, Asp282, and Ala353. The tract at residues 275–282 (ILFLNKQD) is G4 motif. The interval 351–356 (TCAVDT) is G5 motif.

It belongs to the G-alpha family. G(s) subfamily. In terms of assembly, g proteins are composed of 3 units; alpha, beta and gamma. The alpha chain contains the guanine nucleotide binding site. Interacts with GAS2L2. Interacts (GDP-bound form) with RIC8B (via C-terminus); promoting GNAL folding and association with the plasma membrane.

It localises to the cell membrane. The catalysed reaction is GTP + H2O = GDP + phosphate + H(+). Guanine nucleotide-binding protein (G protein) involved as transducer in olfactory signal transduction controlled by G protein-coupled receptors (GPCRs). Contains the guanine nucleotide binding site and alternates between an active, GTP-bound state and an inactive, GDP-bound state. Signaling by an activated GPCR promotes GDP release and GTP binding. The alpha subunit has a low GTPase activity that converts bound GTP to GDP, thereby terminating the signal. Both GDP release and GTP hydrolysis are modulated by numerous regulatory proteins. GNAL/G(olf) alpha specifically mediates olfactory signal transduction within the olfactory neuroepithelium and the basal ganglia following GPCRs activation. Acts by promoting the specific activation of adenylyl cyclase ADCY3, resulting in increased levels of the signaling molecule cAMP. This Rattus norvegicus (Rat) protein is Guanine nucleotide-binding protein G(olf) subunit alpha.